Here is a 630-residue protein sequence, read N- to C-terminus: Adagio-like protein 3 (630 aa).

Positions 54 to 126 (EDEAAAWEGR…PLVDPMVVSE (73 aa)) constitute a PAS domain. Cysteine 102 carries the S-4a-FMN cysteine modification. Positions 220–268 (YCCILQLSDEVLAHNILSRLSPRDVASIGSVCTRMHELTKNDHLRKMVC) constitute an F-box domain. 5 Kelch repeats span residues 380 to 430 (SWLV…CTLD), 432 to 483 (SKLV…SVFG), 485 to 537 (TKLF…RLDH), 545 to 597 (GRII…CVVG), and 599 to 629 (TRVL…PDED).

It belongs to the ADAGIO family. FMN binds covalently to cysteine after exposure to blue light and is reversed in the dark.

The protein localises to the nucleus. It participates in protein modification; protein ubiquitination. Functionally, component of an E3 ubiquitin ligase complex that plays a central role in blue light-dependent circadian cycles. Acts as a blue light photoreceptor, due to the presence of FMN, that mediates light-regulated protein degradation of critical clock components by targeting them to the proteasome complex. The SCF(ADO3) E3 ubiquitin ligase complex is involved in the regulation of circadian clock-dependent processes including transition to flowering time, hypocotyl elongation, cotyledons and leaf movement rhythms. The chain is Adagio-like protein 3 from Oryza sativa subsp. japonica (Rice).